Consider the following 236-residue polypeptide: Orotidine 5'-phosphate decarboxylase (236 aa).

Substrate contacts are provided by residues aspartate 14, lysine 36, 63-72 (DLKFHDIPNT), threonine 122, arginine 183, glutamine 192, glycine 212, and arginine 213. Lysine 65 functions as the Proton donor in the catalytic mechanism.

The protein belongs to the OMP decarboxylase family. Type 1 subfamily. In terms of assembly, homodimer.

It carries out the reaction orotidine 5'-phosphate + H(+) = UMP + CO2. It functions in the pathway pyrimidine metabolism; UMP biosynthesis via de novo pathway; UMP from orotate: step 2/2. Functionally, catalyzes the decarboxylation of orotidine 5'-monophosphate (OMP) to uridine 5'-monophosphate (UMP). The sequence is that of Orotidine 5'-phosphate decarboxylase from Chromohalobacter salexigens (strain ATCC BAA-138 / DSM 3043 / CIP 106854 / NCIMB 13768 / 1H11).